Consider the following 910-residue polypeptide: Constitutive coactivator of peroxisome proliferator-activated receptor gamma (910 aa).

Disordered stretches follow at residues 333 to 416 (SDAE…VPMC), 443 to 483 (SEPR…ESRQ), and 863 to 910 (SHHA…WRRY). Basic and acidic residues-rich tracts occupy residues 335-351 (AESR…ESRQ), 360-375 (ESRR…EPRQ), and 396-411 (ESRR…EPRQ). Residues 872–890 (QGSSYHRTGSGYSRSSQGQ) are compositionally biased toward polar residues. Position 885 is an omega-N-methylarginine (Arg885). The span at 901–910 (QYEHDQWRRY) shows a compositional bias: basic and acidic residues.

Belongs to the constitutive coactivator of PPAR-gamma family. Interacts with ESR1 and RXRA. Interacts with PPARG; in a ligand-independent manner. In terms of tissue distribution, widely expressed.

The protein resides in the nucleus. Its function is as follows. Functions as a transactivator of PPARG and ESR1. Functions in adipogenesis through PPARG activation. The chain is Constitutive coactivator of peroxisome proliferator-activated receptor gamma (FAM120B) from Homo sapiens (Human).